Reading from the N-terminus, the 530-residue chain is Glucose-6-phosphate isomerase (530 aa).

The Proton donor role is filled by Glu356. Active-site residues include His387 and Lys502.

The protein belongs to the GPI family.

The protein localises to the cytoplasm. It carries out the reaction alpha-D-glucose 6-phosphate = beta-D-fructose 6-phosphate. The protein operates within carbohydrate biosynthesis; gluconeogenesis. Its pathway is carbohydrate degradation; glycolysis; D-glyceraldehyde 3-phosphate and glycerone phosphate from D-glucose: step 2/4. Catalyzes the reversible isomerization of glucose-6-phosphate to fructose-6-phosphate. The protein is Glucose-6-phosphate isomerase of Borrelia garinii subsp. bavariensis (strain ATCC BAA-2496 / DSM 23469 / PBi) (Borreliella bavariensis).